Consider the following 162-residue polypeptide: MNKPLRYAMNVLSVRDYSEVEIRRKCAAYLYKSEGTESEADEAIAQATAEDVEAAIAYCKEHGWLDDARYARRYISSRSRKGYGVQRIRMELSQKGIDKTTLTTALNESDIDWCILAKSVVERKFGHPLSDEWKDKVKHQRYLLYRGFFHEEIQSIYTNFSD.

The protein belongs to the RecX family.

The protein localises to the cytoplasm. Functionally, modulates RecA activity. The protein is Regulatory protein RecX of Pectobacterium atrosepticum (strain SCRI 1043 / ATCC BAA-672) (Erwinia carotovora subsp. atroseptica).